A 239-amino-acid chain; its full sequence is TPR repeat-containing protein TP_0282 (239 aa).

The helical transmembrane segment at Leu21–Met43 threads the bilayer. TPR repeat units follow at residues Ala112–Ser145 and Gly149–Pro182.

It localises to the cell membrane. The polypeptide is TPR repeat-containing protein TP_0282 (Treponema pallidum (strain Nichols)).